A 274-amino-acid polypeptide reads, in one-letter code: Beta-lysine N(6)-acetyltransferase (274 aa).

Residues 123–274 form the N-acetyltransferase domain; sequence FHLKIANETD…DMNFWYKLSE (152 aa).

The protein belongs to the acetyltransferase family.

The enzyme catalyses (3S)-3,6-diaminohexanoate + acetyl-CoA = (3S)-6-acetamido-3-aminohexanoate + CoA + H(+). Functionally, catalyzes the acetylation of beta-lysine to N6-acetyl-beta-lysine, a compatible solute produced by methanogenic archaea that helps cells to cope with salt stress. The sequence is that of Beta-lysine N(6)-acetyltransferase from Methanococcus maripaludis (strain DSM 14266 / JCM 13030 / NBRC 101832 / S2 / LL).